The sequence spans 198 residues: Recombination protein RecR (198 aa).

The C4-type zinc finger occupies Cys-57–Cys-72. Residues Ser-80–Ala-175 enclose the Toprim domain.

The protein belongs to the RecR family.

Its function is as follows. May play a role in DNA repair. It seems to be involved in an RecBC-independent recombinational process of DNA repair. It may act with RecF and RecO. This chain is Recombination protein RecR, found in Streptococcus agalactiae serotype Ia (strain ATCC 27591 / A909 / CDC SS700).